Consider the following 132-residue polypeptide: Large ribosomal subunit protein uL24 (132 aa).

This sequence belongs to the universal ribosomal protein uL24 family. Part of the 50S ribosomal subunit.

One of two assembly initiator proteins, it binds directly to the 5'-end of the 23S rRNA, where it nucleates assembly of the 50S subunit. In terms of biological role, located at the polypeptide exit tunnel on the outside of the subunit. The protein is Large ribosomal subunit protein uL24 of Aeropyrum pernix (strain ATCC 700893 / DSM 11879 / JCM 9820 / NBRC 100138 / K1).